Consider the following 247-residue polypeptide: Small ribosomal subunit protein eS6 (247 aa).

The interval 194 to 247 (ALKKKRVTKKREDHAEYTKLLAQRMKEAKERKMERKRSNSRSKGDSIRESTSKK) is disordered. Basic and acidic residues predominate over residues 217–247 (RMKEAKERKMERKRSNSRSKGDSIRESTSKK).

Belongs to the eukaryotic ribosomal protein eS6 family. Ribosomal protein S6 is the major substrate of protein kinases in eukaryote ribosomes.

In terms of biological role, component of the 40S small ribosomal subunit. Plays an important role in controlling cell growth and proliferation through the selective translation of particular classes of mRNA. The chain is Small ribosomal subunit protein eS6 (RPS6) from Aplysia californica (California sea hare).